The following is a 725-amino-acid chain: MPQSTPSQEVQRVPWDNKPALKQITLRATIAGIAIGSLVLTSNFQFGLQTGWVSMMSLPSALLACAFFKNIWPLIFPNDRPFSDVENVYVQSMAVAVGTGPLAFGFVGVIPAIEKFLTNDESGGLREQGQSFTFRELLIWSTALAFFGIFFAVPLRKQVIVREKLPFPSGSATATLISVLNGTEILQEVSKSELLEMRQRRLNECPEVLQPNRDPEEADYLMNSSHSELGDYTATSQDGSSILSTGSENYRANIIILLKTFVVSSLYTMVSYFVPVIRSIPVFGKYLSNNYLWNFQPSPAYIGQGIIMGLPTVSYMLIGCFLGWGVLAPLARYKRWVPPDADVHDWEEGVQGWILWSSLSIMVADSVVAFIVVTVKSIVKFILIDDKAALLNNIIDDTFQSMLLEEERAINSSRRNTYVDGRQDTVRLVSRDNEIEVDSKHLVRYTTVISGCLVSSIICIVSIIYLFGIQVIPLYAIITALILALFLSILGIRALGETDLNPVSGIGKISQLIFAFIIPRDRPGSVLMNVVSGGIAEASAQQAGDLMQDLKTGHLLGASPRAQFCAQLIGACWSIILSSFMYLCYNKVYSIPSEQFRIPTAVVWIDCARLVTGKGLPDKALECSMILGVIFAVLSLIRNTYRDYGYGWILYIPSGVAVGVGIFNSPSFTIARFIGGWASHFWLKNHRGDLNAKTKMIVFSSGLVLGEGIFSVINMLFICLNVPHY.

9 helical membrane-spanning segments follow: residues 28–48, 134–154, 254–274, 353–373, 449–469, 472–492, 564–584, 644–664, and 697–717; these read ATIA…QFGL, FREL…FAVP, IIIL…SYFV, WILW…FIVV, ISGC…LFGI, IPLY…ILGI, FCAQ…MYLC, YGYG…GIFN, and IVFS…NMLF.

Belongs to the oligopeptide OPT transporter family.

Its subcellular location is the membrane. This is Putative oligopeptide transporter YGL114W from Saccharomyces cerevisiae (strain ATCC 204508 / S288c) (Baker's yeast).